We begin with the raw amino-acid sequence, 609 residues long: Alpha-glucosides permease MPH2 (609 aa).

Residues 1–106 (MKNLSFLINR…AAAWSLLVST (106 aa)) lie on the Cytoplasmic side of the membrane. Residues 107–127 (TLIMEGYDTAILGAFYALPIF) traverse the membrane as a helical segment. Topologically, residues 128–142 (QRKFGSQNDKTGEWE) are extracellular. Residues 143 to 163 (ISASWQIGLTLCYMAGEIVGL) form a helical membrane-spanning segment. Residues 164–178 (QLTGPSVDLVGNRYT) are Cytoplasmic-facing. The chain crosses the membrane as a helical span at residues 179–199 (LIIALFFLAAFTFILYFCNSL). A topological domain (extracellular) is located at residue G200. Residues 201 to 221 (MIAVGQALCGMPWGCFQCLTV) form a helical membrane-spanning segment. The Cytoplasmic segment spans residues 222–234 (SYASEICPLALRY). Residues 235–255 (YLTTYSNLCWLFGQLFAAGIM) traverse the membrane as a helical segment. Topologically, residues 256–270 (KNSQKKYADSELGYK) are extracellular. A helical transmembrane segment spans residues 271 to 291 (LPFALQWILPVPLALGIFFAP). Over 292–363 (ESPWWLVKKG…EDKINRRRTR (72 aa)) the chain is Cytoplasmic. Residues 364–384 (ITCLCWAGQATCGSILIGYST) form a helical membrane-spanning segment. Residues 385-397 (YFYEKAGVSTEMS) lie on the Extracellular side of the membrane. A helical membrane pass occupies residues 398 to 418 (FTFSIIQYCLGICATFLSWWA). Topologically, residues 419 to 426 (SKYFGRYD) are cytoplasmic. Residues 427–447 (LYAFGLAFQTIVFFIIGGLGC) traverse the membrane as a helical segment. At 448–459 (SSTHGSKMGSGS) the chain is on the extracellular side. A helical transmembrane segment spans residues 460-480 (LLMAVAFFYNLGIAPVVFCLV). Residues 481 to 492 (SEMPSSRLRTKT) lie on the Cytoplasmic side of the membrane. The chain crosses the membrane as a helical span at residues 493 to 513 (IILARNTYNVVSIICSVLILY). At 514-525 (QLNSKKWNWGAK) the chain is on the extracellular side. The helical transmembrane segment at 526-546 (SGFFWGVLCFCTLIWAVVDLP) threads the bilayer. The Cytoplasmic portion of the chain corresponds to 547–609 (ETAGKTFVEI…QRNSNVSHHL (63 aa)).

This sequence belongs to the major facilitator superfamily. Sugar transporter (TC 2.A.1.1) family.

The protein resides in the cell membrane. High-affinity uptake of maltose and maltotriose. Also transports alpha-methylglucoside, glucose and turanose but not melezitose or trehalose. This chain is Alpha-glucosides permease MPH2 (MPH2), found in Saccharomyces cerevisiae (strain ATCC 204508 / S288c) (Baker's yeast).